We begin with the raw amino-acid sequence, 261 residues long: Imidazole glycerol phosphate synthase subunit HisF (261 aa).

Residues Asp-11 and Asp-130 contribute to the active site.

It belongs to the HisA/HisF family. Heterodimer of HisH and HisF.

Its subcellular location is the cytoplasm. It carries out the reaction 5-[(5-phospho-1-deoxy-D-ribulos-1-ylimino)methylamino]-1-(5-phospho-beta-D-ribosyl)imidazole-4-carboxamide + L-glutamine = D-erythro-1-(imidazol-4-yl)glycerol 3-phosphate + 5-amino-1-(5-phospho-beta-D-ribosyl)imidazole-4-carboxamide + L-glutamate + H(+). It functions in the pathway amino-acid biosynthesis; L-histidine biosynthesis; L-histidine from 5-phospho-alpha-D-ribose 1-diphosphate: step 5/9. In terms of biological role, IGPS catalyzes the conversion of PRFAR and glutamine to IGP, AICAR and glutamate. The HisF subunit catalyzes the cyclization activity that produces IGP and AICAR from PRFAR using the ammonia provided by the HisH subunit. The polypeptide is Imidazole glycerol phosphate synthase subunit HisF (Heliobacterium mobile (Heliobacillus mobilis)).